Reading from the N-terminus, the 147-residue chain is MEWHSKFSGPNTSPGFLLWQATQSWQRKVGKALAEFDLTHVQFVLLTSCKYMIAHGETVTQKKLASFSQTNIMMVSEVVRTLEKKGFIERSKNPQDKREVLLSLTEIGGEKVTAALPIVEKIDQAFFAAAMKKENFLSGLQELLKHE.

Residues 11 to 147 enclose the HTH marR-type domain; it reads NTSPGFLLWQ…SGLQELLKHE (137 aa). A DNA-binding region (H-T-H motif) is located at residues 61-84; the sequence is QKKLASFSQTNIMMVSEVVRTLEK.

This is an uncharacterized protein from Bacillus subtilis (strain 168).